The sequence spans 102 residues: Small ribosomal subunit protein uS10 (102 aa).

The protein belongs to the universal ribosomal protein uS10 family. As to quaternary structure, part of the 30S ribosomal subunit.

In terms of biological role, involved in the binding of tRNA to the ribosomes. In Acidiphilium cryptum (strain JF-5), this protein is Small ribosomal subunit protein uS10.